The following is a 47-amino-acid chain: Large ribosomal subunit protein bL34 (47 aa).

Belongs to the bacterial ribosomal protein bL34 family.

The protein is Large ribosomal subunit protein bL34 of Corynebacterium jeikeium (strain K411).